The following is a 193-amino-acid chain: Potassium-transporting ATPase KdpC subunit (193 aa).

The chain crosses the membrane as a helical span at residues 7-27 (PLIVVFVVLVAVTGLAYPAVM).

The protein belongs to the KdpC family. In terms of assembly, the system is composed of three essential subunits: KdpA, KdpB and KdpC.

It is found in the cell inner membrane. Part of the high-affinity ATP-driven potassium transport (or Kdp) system, which catalyzes the hydrolysis of ATP coupled with the electrogenic transport of potassium into the cytoplasm. This subunit acts as a catalytic chaperone that increases the ATP-binding affinity of the ATP-hydrolyzing subunit KdpB by the formation of a transient KdpB/KdpC/ATP ternary complex. In Burkholderia mallei (strain NCTC 10247), this protein is Potassium-transporting ATPase KdpC subunit.